A 273-amino-acid chain; its full sequence is Putative pyruvate, phosphate dikinase regulatory protein (273 aa).

An ADP-binding site is contributed by 153-160; sequence GVSRTSKS.

This sequence belongs to the pyruvate, phosphate/water dikinase regulatory protein family. PDRP subfamily.

The catalysed reaction is N(tele)-phospho-L-histidyl/L-threonyl-[pyruvate, phosphate dikinase] + ADP = N(tele)-phospho-L-histidyl/O-phospho-L-threonyl-[pyruvate, phosphate dikinase] + AMP + H(+). It carries out the reaction N(tele)-phospho-L-histidyl/O-phospho-L-threonyl-[pyruvate, phosphate dikinase] + phosphate + H(+) = N(tele)-phospho-L-histidyl/L-threonyl-[pyruvate, phosphate dikinase] + diphosphate. Functionally, bifunctional serine/threonine kinase and phosphorylase involved in the regulation of the pyruvate, phosphate dikinase (PPDK) by catalyzing its phosphorylation/dephosphorylation. The protein is Putative pyruvate, phosphate dikinase regulatory protein of Ehrlichia ruminantium (strain Gardel).